We begin with the raw amino-acid sequence, 254 residues long: Imidazole glycerol phosphate synthase subunit HisF (254 aa).

Residues Asp11 and Asp130 contribute to the active site.

Belongs to the HisA/HisF family. In terms of assembly, heterodimer of HisH and HisF.

The protein resides in the cytoplasm. It carries out the reaction 5-[(5-phospho-1-deoxy-D-ribulos-1-ylimino)methylamino]-1-(5-phospho-beta-D-ribosyl)imidazole-4-carboxamide + L-glutamine = D-erythro-1-(imidazol-4-yl)glycerol 3-phosphate + 5-amino-1-(5-phospho-beta-D-ribosyl)imidazole-4-carboxamide + L-glutamate + H(+). Its pathway is amino-acid biosynthesis; L-histidine biosynthesis; L-histidine from 5-phospho-alpha-D-ribose 1-diphosphate: step 5/9. IGPS catalyzes the conversion of PRFAR and glutamine to IGP, AICAR and glutamate. The HisF subunit catalyzes the cyclization activity that produces IGP and AICAR from PRFAR using the ammonia provided by the HisH subunit. This Gloeobacter violaceus (strain ATCC 29082 / PCC 7421) protein is Imidazole glycerol phosphate synthase subunit HisF.